The following is a 317-amino-acid chain: DNA-directed RNA polymerase subunit alpha (317 aa).

Positions 1–234 (MKQFVRPEFI…AHLEFFIDLN (234 aa)) are alpha N-terminal domain (alpha-NTD). The tract at residues 249 to 317 (DDKELDRTVE…ASLGLAFRQS (69 aa)) is alpha C-terminal domain (alpha-CTD).

This sequence belongs to the RNA polymerase alpha chain family. Homodimer. The RNAP catalytic core consists of 2 alpha, 1 beta, 1 beta' and 1 omega subunit. When a sigma factor is associated with the core the holoenzyme is formed, which can initiate transcription.

The enzyme catalyses RNA(n) + a ribonucleoside 5'-triphosphate = RNA(n+1) + diphosphate. DNA-dependent RNA polymerase catalyzes the transcription of DNA into RNA using the four ribonucleoside triphosphates as substrates. The chain is DNA-directed RNA polymerase subunit alpha from Mycoplasma capricolum subsp. capricolum (strain California kid / ATCC 27343 / NCTC 10154).